Reading from the N-terminus, the 630-residue chain is tRNA uridine 5-carboxymethylaminomethyl modification enzyme MnmG (630 aa).

13 to 18 lines the FAD pocket; sequence GGGHAG. Residue 273-287 participates in NAD(+) binding; the sequence is GPRYCPSIEDKIHRF.

Belongs to the MnmG family. As to quaternary structure, homodimer. Heterotetramer of two MnmE and two MnmG subunits. Requires FAD as cofactor.

The protein resides in the cytoplasm. Its function is as follows. NAD-binding protein involved in the addition of a carboxymethylaminomethyl (cmnm) group at the wobble position (U34) of certain tRNAs, forming tRNA-cmnm(5)s(2)U34. The protein is tRNA uridine 5-carboxymethylaminomethyl modification enzyme MnmG of Pseudomonas putida (Arthrobacter siderocapsulatus).